Consider the following 527-residue polypeptide: Inorganic phosphate transporter 1-1 (527 aa).

Residues 1–21 lie on the Cytoplasmic side of the membrane; that stretch reads MAGGQLNVLSTLDQAKTQWYH. Residues 22-42 traverse the membrane as a helical segment; it reads FMAIVIAGMGFFTDAYDLFCI. The Extracellular portion of the chain corresponds to 43–70; it reads SLVTKLLGRIYYTDDSKDTPGALPPNVS. A helical transmembrane segment spans residues 71-91; sequence AAVTGVALCGTLAGQLFFGWL. Over 92–99 the chain is Cytoplasmic; it reads GDKLGRKS. Residues 100–120 traverse the membrane as a helical segment; that stretch reads VYGFTLILMVVCSVASGLSFG. The Extracellular segment spans residues 121 to 124; the sequence is SSAK. Residues 125–145 form a helical membrane-spanning segment; the sequence is GVVSTLCFFRFWLGFGIGGDY. The Cytoplasmic portion of the chain corresponds to 146–163; that stretch reads PLSATIMSEYANKRTRGA. A helical membrane pass occupies residues 164 to 184; the sequence is FIAAVFAMQGFGILFGAIVAL. Residues 185–211 are Extracellular-facing; it reads AVSAGFRHAYPAPSYSDNHAASLVPQA. The helical transmembrane segment at 212-232 threads the bilayer; it reads DYVWRIILMFGTVPAALTYYW. The Cytoplasmic portion of the chain corresponds to 233–292; it reads RMKMPETARYTALIARNAKQAAADMSKVLHTQIEESADRAETVAVGGESWGLFSRQFLRR. Residues 293–313 form a helical membrane-spanning segment; that stretch reads HGLHLLATTSTWFLLDIAFYS. The Extracellular segment spans residues 314–348; it reads QNLFQKDIFSKVGWIPPAKTMNALEELYRIARAQA. The helical transmembrane segment at 349 to 369 threads the bilayer; that stretch reads LIALCGTIPGYWFTVAFIEIM. Residues 370–371 are Cytoplasmic-facing; it reads GR. A helical membrane pass occupies residues 372 to 392; the sequence is FWIQIMGFAMMTAFMLGLAIP. The Extracellular portion of the chain corresponds to 393–405; it reads YHHWTTPGHHTGF. Residues 406–426 traverse the membrane as a helical segment; that stretch reads IVMYGFTFFFANFGPNSTTFI. The Cytoplasmic portion of the chain corresponds to 427-442; it reads VPAEIYPARLRSTCHG. A helical transmembrane segment spans residues 443–463; it reads ISAAAGKAGAIIGAFGFLYAA. At 464–481 the chain is on the extracellular side; the sequence is QDQHKPEPGYPRGIGIKN. The helical transmembrane segment at 482–502 threads the bilayer; sequence ALFVLAGTNFLGTIMTLLVPE. Residues 503-527 are Cytoplasmic-facing; that stretch reads SKGMSLEVISQEVADGDDEEAAYPK.

The protein belongs to the major facilitator superfamily. Phosphate:H(+) symporter (TC 2.A.1.9) family. Expressed in roots, stems and leaves.

It localises to the membrane. In terms of biological role, high-affinity transporter for external inorganic phosphate. Required for phosphate acquisition in plant. This Oryza sativa subsp. japonica (Rice) protein is Inorganic phosphate transporter 1-1 (PHT1-1).